The primary structure comprises 218 residues: Small ribosomal subunit protein uS3 (218 aa).

The 69-residue stretch at 38–106 folds into the KH type-2 domain; sequence IREFISKRLS…RVHINILEIK (69 aa).

This sequence belongs to the universal ribosomal protein uS3 family. As to quaternary structure, part of the 30S ribosomal subunit. Forms a tight complex with proteins S10 and S14.

Binds the lower part of the 30S subunit head. Binds mRNA in the 70S ribosome, positioning it for translation. The polypeptide is Small ribosomal subunit protein uS3 (Bacillus velezensis (strain DSM 23117 / BGSC 10A6 / LMG 26770 / FZB42) (Bacillus amyloliquefaciens subsp. plantarum)).